Consider the following 368-residue polypeptide: Protein-glutamate methylesterase/protein-glutamine glutaminase 1 (368 aa).

Residues 4 to 121 (KVLVVDDSGF…SRNPDKVRQL (118 aa)) form the Response regulatory domain. Position 55 is a 4-aspartylphosphate (Asp55). The tract at residues 138 to 176 (SLPPLPSATSSSHAPASSSSVGASARVGAGASPAPASTS) is disordered. Positions 144–176 (SATSSSHAPASSSSVGASARVGAGASPAPASTS) are enriched in low complexity. Residues 172-368 (PASTSAAPKR…IGRHLVEACQ (197 aa)) form the CheB-type methylesterase domain. Residues Ser192, His219, and Asp312 contribute to the active site.

Belongs to the CheB family. Post-translationally, phosphorylated by CheA. Phosphorylation of the N-terminal regulatory domain activates the methylesterase activity.

The protein localises to the cytoplasm. It carries out the reaction [protein]-L-glutamate 5-O-methyl ester + H2O = L-glutamyl-[protein] + methanol + H(+). The enzyme catalyses L-glutaminyl-[protein] + H2O = L-glutamyl-[protein] + NH4(+). In terms of biological role, involved in chemotaxis. Part of a chemotaxis signal transduction system that modulates chemotaxis in response to various stimuli. Catalyzes the demethylation of specific methylglutamate residues introduced into the chemoreceptors (methyl-accepting chemotaxis proteins or MCP) by CheR. Also mediates the irreversible deamidation of specific glutamine residues to glutamic acid. The protein is Protein-glutamate methylesterase/protein-glutamine glutaminase 1 of Pseudomonas aeruginosa (strain ATCC 15692 / DSM 22644 / CIP 104116 / JCM 14847 / LMG 12228 / 1C / PRS 101 / PAO1).